The sequence spans 675 residues: Protein REPRESSOR OF VERNALIZATION 1 (675 aa).

The interval 1–143 is disordered; that stretch reads MGRRRRFTQQ…DPVKVTGKGK (143 aa). Low complexity predominate over residues 22 to 31; that stretch reads AEPPKTAKPA. A compositionally biased stretch (acidic residues) spans 48-70; the sequence is EEEDEDEEDELELEDEEDDEKDL. A compositionally biased stretch (basic and acidic residues) spans 71–86; that stretch reads EEMRRNEEEERREETR. A Nuclear localization signal motif is present at residues 73-80; the sequence is MRRNEEEE. The span at 87 to 96 shows a compositional bias: basic residues; that stretch reads TRRRRGRKPK. Positions 113–127 are enriched in acidic residues; that stretch reads SDEEEEEEVREEDST. One can recognise a BAH domain in the interval 157 to 275; the sequence is NTFELEDPVL…TVAKKLWNLT (119 aa). Disordered stretches follow at residues 300 to 349, 493 to 512, and 587 to 675; these read ELPD…KPET, GLTP…LQMT, and LASP…ADHE. 3 stretches are compositionally biased toward basic and acidic residues: residues 333–346, 499–512, and 613–627; these read VSRD…HFVK, KTSE…LQMT, and KLEK…KPEE. A TFIIS central domain is found at 372-518; sequence YRDKWLDKLL…LQMTDARCER (147 aa).

In terms of tissue distribution, expressed constitutively.

The protein resides in the nucleus. Component of a grass-specific mechanism of vernalization, a process by which prolonged cold exposure provides competence to flower in daylengths longer than 12 hours. Negative regulator of flowering required for vernalization establishment by repressing VRN1 before vernalization and in the fall season. The polypeptide is Protein REPRESSOR OF VERNALIZATION 1 (Brachypodium distachyon (Purple false brome)).